Reading from the N-terminus, the 574-residue chain is K(+)/H(+) antiporter NhaP2 (574 aa).

Transmembrane regions (helical) follow at residues 6–26, 30–50, 58–78, 87–107, 109–129, 173–193, 196–216, 219–239, 242–262, 271–291, 299–319, 335–355, and 359–379; these read INSFFLIGALLAAVSVLLSPM, LGIPILLIFLAVGILAGEDGL, YSTAYLVSNLALAIILLDGGM, VALWPALSLATFGVAITTSIT, LMAAWLFDLHWLQGLLVGAIV, IAILANVDTELSVSFMLVSFI, FGLGICLGLGGGWLLWKLVNL, LAEGLYSILVLSGGLIIYAVS, LGGSGILSIYLVGLFLGNKPT, VLDGMTWVSQIGMFLVLGLLL, ILLPGFALAFGMILFARPLAV, WFISWVGLRGAVPIILAVFPM, and LPGAQLYFNLAFFVVLVSLLI. The RCK C-terminal domain occupies 405-486; that stretch reads SGVEIYPSSE…LDALSHLFSQ (82 aa).

This sequence belongs to the monovalent cation:proton antiporter 1 (CPA1) transporter (TC 2.A.36) family. NhaP2 subfamily.

The protein resides in the cell inner membrane. It catalyses the reaction K(+)(in) + H(+)(out) = K(+)(out) + H(+)(in). In terms of biological role, k(+)/H(+) antiporter that extrudes potassium in exchange for external protons and maintains the internal concentration of potassium under toxic levels. The polypeptide is K(+)/H(+) antiporter NhaP2 (Shewanella sp. (strain W3-18-1)).